A 567-amino-acid polypeptide reads, in one-letter code: Oxygen-dependent choline dehydrogenase (567 aa).

Residue 6–35 participates in FAD binding; sequence DYIIVGAGSAGNTLATRLTEDEGVTVLLLE. Residues 182 to 203 form a disordered region; it reads QQEGFGPMDRTVTPKGRRASTA. H475 (proton acceptor) is an active-site residue.

It belongs to the GMC oxidoreductase family. FAD serves as cofactor.

The catalysed reaction is choline + A = betaine aldehyde + AH2. The enzyme catalyses betaine aldehyde + NAD(+) + H2O = glycine betaine + NADH + 2 H(+). It participates in amine and polyamine biosynthesis; betaine biosynthesis via choline pathway; betaine aldehyde from choline (cytochrome c reductase route): step 1/1. Involved in the biosynthesis of the osmoprotectant glycine betaine. Catalyzes the oxidation of choline to betaine aldehyde and betaine aldehyde to glycine betaine at the same rate. This Pseudomonas fluorescens (strain ATCC BAA-477 / NRRL B-23932 / Pf-5) protein is Oxygen-dependent choline dehydrogenase.